Consider the following 335-residue polypeptide: MERIVEVEKFSEESSFETTLRPSDWDEYIGQEKIKNNLKVFIQACKKRGETLDHVLFFGPPGLGKTTLSLIIASQMEANIKITAAPMIEKSGDLAAILTNLEEGDILFIDEIHRLSPAIEEILYPAMEDFRLDIIIGSGPAAQTIKIDLPKFTLIGATTRAGMLSSPLRDRFGMHFRLQFYTPQELAQIITNAANKLSKDIDAEAALEIAKRSRGTPRIALRLLKRVRDFSDVADEKTITLKRTQKALEALGVDERGFDELDLKLLKLLADAKGKPLGLSTIAAALSEDEGTIEDVIEPFLLANGYLERTARGRMATLKTYEILKLTPNIQNSLF.

The tract at residues 1-181 is large ATPase domain (RuvB-L); the sequence is MERIVEVEKF…FGMHFRLQFY (181 aa). ATP-binding positions include Leu20, Arg21, Gly62, Lys65, Thr66, Thr67, 128-130, Arg171, Tyr181, and Arg218; that span reads EDF. Thr66 contacts Mg(2+). The segment at 182–252 is small ATPAse domain (RuvB-S); the sequence is TPQELAQIIT…RTQKALEALG (71 aa). Residues 255–335 are head domain (RuvB-H); the sequence is ERGFDELDLK…LTPNIQNSLF (81 aa). Residues Arg309 and Arg314 each contribute to the DNA site.

The protein belongs to the RuvB family. Homohexamer. Forms an RuvA(8)-RuvB(12)-Holliday junction (HJ) complex. HJ DNA is sandwiched between 2 RuvA tetramers; dsDNA enters through RuvA and exits via RuvB. An RuvB hexamer assembles on each DNA strand where it exits the tetramer. Each RuvB hexamer is contacted by two RuvA subunits (via domain III) on 2 adjacent RuvB subunits; this complex drives branch migration. In the full resolvosome a probable DNA-RuvA(4)-RuvB(12)-RuvC(2) complex forms which resolves the HJ.

It is found in the cytoplasm. It catalyses the reaction ATP + H2O = ADP + phosphate + H(+). The RuvA-RuvB-RuvC complex processes Holliday junction (HJ) DNA during genetic recombination and DNA repair, while the RuvA-RuvB complex plays an important role in the rescue of blocked DNA replication forks via replication fork reversal (RFR). RuvA specifically binds to HJ cruciform DNA, conferring on it an open structure. The RuvB hexamer acts as an ATP-dependent pump, pulling dsDNA into and through the RuvAB complex. RuvB forms 2 homohexamers on either side of HJ DNA bound by 1 or 2 RuvA tetramers; 4 subunits per hexamer contact DNA at a time. Coordinated motions by a converter formed by DNA-disengaged RuvB subunits stimulates ATP hydrolysis and nucleotide exchange. Immobilization of the converter enables RuvB to convert the ATP-contained energy into a lever motion, pulling 2 nucleotides of DNA out of the RuvA tetramer per ATP hydrolyzed, thus driving DNA branch migration. The RuvB motors rotate together with the DNA substrate, which together with the progressing nucleotide cycle form the mechanistic basis for DNA recombination by continuous HJ branch migration. Branch migration allows RuvC to scan DNA until it finds its consensus sequence, where it cleaves and resolves cruciform DNA. In Nitratiruptor sp. (strain SB155-2), this protein is Holliday junction branch migration complex subunit RuvB.